The sequence spans 79 residues: Acyl carrier protein (79 aa).

In terms of domain architecture, Carrier spans 2–77 (SDIADKVKKI…DAIDYIEKQK (76 aa)). Serine 37 is subject to O-(pantetheine 4'-phosphoryl)serine.

This sequence belongs to the acyl carrier protein (ACP) family. 4'-phosphopantetheine is transferred from CoA to a specific serine of apo-ACP by AcpS. This modification is essential for activity because fatty acids are bound in thioester linkage to the sulfhydryl of the prosthetic group.

The protein localises to the cytoplasm. It participates in lipid metabolism; fatty acid biosynthesis. Its function is as follows. Carrier of the growing fatty acid chain in fatty acid biosynthesis. The sequence is that of Acyl carrier protein from Gluconobacter oxydans (strain 621H) (Gluconobacter suboxydans).